The sequence spans 336 residues: Holliday junction branch migration complex subunit RuvB (336 aa).

The segment at Ala-4–Tyr-184 is large ATPase domain (RuvB-L). ATP-binding positions include Arg-24, Gly-65, Lys-68, Thr-69, Thr-70, Glu-131 to Tyr-133, Arg-174, Tyr-184, and Arg-221. Mg(2+) is bound at residue Thr-69. The tract at residues Asn-185 to Asp-255 is small ATPAse domain (RuvB-S). The interval Ala-258 to Lys-336 is head domain (RuvB-H). Residues Arg-294, Arg-313, and Arg-318 each contribute to the DNA site.

Belongs to the RuvB family. In terms of assembly, homohexamer. Forms an RuvA(8)-RuvB(12)-Holliday junction (HJ) complex. HJ DNA is sandwiched between 2 RuvA tetramers; dsDNA enters through RuvA and exits via RuvB. An RuvB hexamer assembles on each DNA strand where it exits the tetramer. Each RuvB hexamer is contacted by two RuvA subunits (via domain III) on 2 adjacent RuvB subunits; this complex drives branch migration. In the full resolvosome a probable DNA-RuvA(4)-RuvB(12)-RuvC(2) complex forms which resolves the HJ.

The protein localises to the cytoplasm. The catalysed reaction is ATP + H2O = ADP + phosphate + H(+). Functionally, the RuvA-RuvB-RuvC complex processes Holliday junction (HJ) DNA during genetic recombination and DNA repair, while the RuvA-RuvB complex plays an important role in the rescue of blocked DNA replication forks via replication fork reversal (RFR). RuvA specifically binds to HJ cruciform DNA, conferring on it an open structure. The RuvB hexamer acts as an ATP-dependent pump, pulling dsDNA into and through the RuvAB complex. RuvB forms 2 homohexamers on either side of HJ DNA bound by 1 or 2 RuvA tetramers; 4 subunits per hexamer contact DNA at a time. Coordinated motions by a converter formed by DNA-disengaged RuvB subunits stimulates ATP hydrolysis and nucleotide exchange. Immobilization of the converter enables RuvB to convert the ATP-contained energy into a lever motion, pulling 2 nucleotides of DNA out of the RuvA tetramer per ATP hydrolyzed, thus driving DNA branch migration. The RuvB motors rotate together with the DNA substrate, which together with the progressing nucleotide cycle form the mechanistic basis for DNA recombination by continuous HJ branch migration. Branch migration allows RuvC to scan DNA until it finds its consensus sequence, where it cleaves and resolves cruciform DNA. The protein is Holliday junction branch migration complex subunit RuvB of Shewanella piezotolerans (strain WP3 / JCM 13877).